A 797-amino-acid polypeptide reads, in one-letter code: Kinesin-like protein Klp68D (797 aa).

A Kinesin motor domain is found at Cys19–Ile344. An ATP-binding site is contributed by Gly106–Thr113. The stretch at Lys350–Gln384 forms a coiled coil. Disordered stretches follow at residues Arg371–Arg450, Ser610–Leu656, and Ala722–Lys797. A compositionally biased stretch (basic residues) spans Thr386 to Lys396. Positions Gln417 to Ser431 are enriched in acidic residues. A compositionally biased stretch (basic and acidic residues) spans Glu432 to Arg450. Residues Glu432–Leu580 adopt a coiled-coil conformation. Residues Gly626–Arg638 are compositionally biased toward basic residues. Residues Lys782 to Ala791 show a composition bias toward low complexity.

The protein belongs to the TRAFAC class myosin-kinesin ATPase superfamily. Kinesin family. Kinesin II subfamily.

The protein resides in the cytoplasm. It is found in the cytoskeleton. Functionally, plus-end directed microtubule motor that may be used for anterograde axonal transport and could conceivably move cargos in fly neurons different than those moved by kinesin heavy chain or other plus-end directed motors. The sequence is that of Kinesin-like protein Klp68D from Drosophila pseudoobscura pseudoobscura (Fruit fly).